A 200-amino-acid polypeptide reads, in one-letter code: WASH complex subunit 3 (200 aa).

Positions 56 to 76 form a coiled coil; sequence SLRIQQIETTLSILEAKLASI. Disordered regions lie at residues 87-130 and 165-200; these read VRAP…AENI and DPNLLDTPDAAVPDASKKRLEEQDDDSSGSESSFSD.

The protein belongs to the CCDC53 family. In terms of assembly, component of the WASH complex.

This chain is WASH complex subunit 3, found in Danio rerio (Zebrafish).